Here is a 286-residue protein sequence, read N- to C-terminus: Nucleotide-binding protein HAPS_0087 (286 aa).

ATP is bound at residue 8 to 15 (GRSGSGKS). A GTP-binding site is contributed by 56–59 (DVRN).

It belongs to the RapZ-like family.

In terms of biological role, displays ATPase and GTPase activities. The chain is Nucleotide-binding protein HAPS_0087 from Glaesserella parasuis serovar 5 (strain SH0165) (Haemophilus parasuis).